We begin with the raw amino-acid sequence, 44 residues long: Large ribosomal subunit protein bL34 (44 aa).

Belongs to the bacterial ribosomal protein bL34 family.

This is Large ribosomal subunit protein bL34 from Buchnera aphidicola subsp. Cinara cedri (strain Cc).